A 99-amino-acid chain; its full sequence is Small ribosomal subunit protein bS20 (99 aa).

Belongs to the bacterial ribosomal protein bS20 family.

In terms of biological role, binds directly to 16S ribosomal RNA. This chain is Small ribosomal subunit protein bS20, found in Synechococcus sp. (strain CC9311).